The chain runs to 390 residues: Lipid droplet-regulating VLDL assembly factor AUP1 homolog (390 aa).

Topologically, residues 1–32 (MASPEASSSGNTEDLRIEDLFHQKRNEDTIAK) are cytoplasmic. Residues 33–53 (IFSIIYAPVGLIILLIRVFLG) lie within the membrane without spanning it. Over 54–390 (FHTFIVACLL…NRQKYMNRDS (337 aa)) the chain is Cytoplasmic. Positions 305 to 347 (QMDECAMRIKQSFPSFHLSAIRRDLEKTRSQTTTVNNLKAGKI) constitute a CUE domain.

This sequence belongs to the AUP1 family.

The protein resides in the endoplasmic reticulum membrane. It localises to the lipid droplet. The chain is Lipid droplet-regulating VLDL assembly factor AUP1 homolog from Caenorhabditis elegans.